The chain runs to 50 residues: C-C motif chemokine 5 (50 aa).

This sequence belongs to the intercrine beta (chemokine CC) family.

The protein localises to the secreted. In terms of biological role, chemoattractant for blood monocytes, memory T-helper cells and eosinophils. Causes the release of histamine from basophils and activates eosinophils. May activate several chemokine receptors including CCR1, CCR3, CCR4 and CCR5. May also be an agonist of the G protein-coupled receptor GPR75. Together with GPR75, may play a role in neuron survival through activation of a downstream signaling pathway involving the PI3, Akt and MAP kinases. By activating GPR75 may also play a role in insulin secretion by islet cells. The sequence is that of C-C motif chemokine 5 (CCL5) from Sus scrofa (Pig).